The sequence spans 335 residues: Aspartate--ammonia ligase (335 aa).

The protein belongs to the class-II aminoacyl-tRNA synthetase family. AsnA subfamily.

The protein localises to the cytoplasm. It carries out the reaction L-aspartate + NH4(+) + ATP = L-asparagine + AMP + diphosphate + H(+). Its pathway is amino-acid biosynthesis; L-asparagine biosynthesis; L-asparagine from L-aspartate (ammonia route): step 1/1. The polypeptide is Aspartate--ammonia ligase (Levilactobacillus brevis (strain ATCC 367 / BCRC 12310 / CIP 105137 / JCM 1170 / LMG 11437 / NCIMB 947 / NCTC 947) (Lactobacillus brevis)).